Reading from the N-terminus, the 201-residue chain is Histidinol dehydrogenase (201 aa).

It belongs to the histidinol dehydrogenase family. As to quaternary structure, homodimer. Zn(2+) is required as a cofactor.

The enzyme catalyses L-histidinol + 2 NAD(+) + H2O = L-histidine + 2 NADH + 3 H(+). It functions in the pathway amino-acid biosynthesis; L-histidine biosynthesis; L-histidine from 5-phospho-alpha-D-ribose 1-diphosphate: step 9/9. Catalyzes the sequential NAD-dependent oxidations of L-histidinol to L-histidinaldehyde and then to L-histidine. This is Histidinol dehydrogenase (hisD) from Buchnera aphidicola subsp. Schlechtendalia chinensis.